Here is a 406-residue protein sequence, read N- to C-terminus: MRAMRPVAHLARCFCASSSVKETRPSIQAIAELRKALPGTSMLKAREALTASRSPDAPDTDNVEAAIAWLEQTRASDGAKREAKVASRVTAEGTIGLCTLSDGISSPGARAAMVELNCETDFVARNDIFGALARDIAHTAAWFPIVAASETSAVLSDVDVAAFLECPIIPFEASEENKHDVISVRAAITSVVARLGEKVALGRVASLAPTSGGSHGSALVCGSFAHGTASAPPAPQTPVAATFASGRVASLLAVQVHGPLSQRIMSRTATTQHNDHDHDRNGDDERKRQLRALARSLARQAAGFPTTSVDAPSATAAVASDASSETSGALLTQPFVMLLPAAGLDPSVNEQKSVRDALELWSNTYAGQADGIRVAALRRWEVGETAARPSDETSFADQVKEAAGLA.

The segment at 387 to 406 (ARPSDETSFADQVKEAAGLA) is disordered.

This sequence belongs to the EF-Ts family.

Its subcellular location is the mitochondrion. Associates with the EF-Tu.GDP complex and induces the exchange of GDP to GTP. It remains bound to the aminoacyl-tRNA.EF-Tu.GTP complex up to the GTP hydrolysis stage on the ribosome. In Malassezia globosa (strain ATCC MYA-4612 / CBS 7966) (Dandruff-associated fungus), this protein is Elongation factor Ts, mitochondrial.